Here is a 634-residue protein sequence, read N- to C-terminus: Calcium up-regulated protein D (634 aa).

The segment at 1–23 is disordered; the sequence is MINIEDISKSSNQSEEKQLKSTS. Ricin B-type lectin domains are found at residues 27–146 and 117–250; these read KPKY…WTTF and PGNG…WGIN.

This sequence belongs to the cup family.

The protein resides in the cytoplasm. Its subcellular location is the membrane. Functionally, may play an important role in stabilizing and/or regulating the cell membrane during Ca(2+) stress or certain stages of development. In Dictyostelium discoideum (Social amoeba), this protein is Calcium up-regulated protein D (cupD).